Here is a 282-residue protein sequence, read N- to C-terminus: U1 small nuclear ribonucleoprotein A (282 aa).

N-acetylalanine is present on alanine 2. The region spanning 10–89 (HTIYINNLNE…KPMRIQYAKT (80 aa)) is the RRM 1 domain. Lysine 60 carries the N6-acetyllysine modification. The segment at 101–141 (FVERDRKREKRKPKSQETPAAKKAVQGGAAAPVVGTVQGPV) is disordered. A compositionally biased stretch (low complexity) spans 119 to 141 (PAAKKAVQGGAAAPVVGTVQGPV). Arginine 152 bears the Omega-N-methylarginine mark. In terms of domain architecture, RRM 2 spans 208–282 (HILFLTNLPE…NAMKISFAKK (75 aa)).

It belongs to the RRM U1 A/B'' family. As to quaternary structure, U1 snRNP is composed of the 7 core Sm proteins SNRPB, SNRPD1, SNRPD2, SNRPD3, SNRPE, SNRPF and SNRPG that assemble in a heptameric protein ring on the Sm site of the small nuclear RNA to form the core snRNP, and at least three U1 snRNP-specific proteins SNRNP70/U1-70K, SNRPA/U1-A and SNRPC/U1-C. Interacts with SFPQ; component of a snRNP-free complex with SFPQ.

It localises to the nucleus. Component of the spliceosomal U1 snRNP, which is essential for recognition of the pre-mRNA 5' splice-site and the subsequent assembly of the spliceosome. U1 snRNP is the first snRNP to interact with pre-mRNA. This interaction is required for the subsequent binding of U2 snRNP and the U4/U6/U5 tri-snRNP. SNRPA binds stem loop II of U1 snRNA. In a snRNP-free form (SF-A) may be involved in coupled pre-mRNA splicing and polyadenylation process. May bind preferentially to the 5'-UGCAC-3' motif on RNAs. In Bos taurus (Bovine), this protein is U1 small nuclear ribonucleoprotein A (SNRPA).